The chain runs to 76 residues: Exodeoxyribonuclease 7 small subunit (76 aa).

Belongs to the XseB family. In terms of assembly, heterooligomer composed of large and small subunits.

The protein localises to the cytoplasm. It catalyses the reaction Exonucleolytic cleavage in either 5'- to 3'- or 3'- to 5'-direction to yield nucleoside 5'-phosphates.. In terms of biological role, bidirectionally degrades single-stranded DNA into large acid-insoluble oligonucleotides, which are then degraded further into small acid-soluble oligonucleotides. In Gluconacetobacter diazotrophicus (strain ATCC 49037 / DSM 5601 / CCUG 37298 / CIP 103539 / LMG 7603 / PAl5), this protein is Exodeoxyribonuclease 7 small subunit.